The following is a 550-amino-acid chain: MKSLVLGLLVGSAIASGPLQHVLHAPPDPEPKPEPEPQVVKDPFEELRDTFDRLRNKAGDIWDDVMDNIPNIMSNMRPLTIPAKKFTRRPDSEWTHIVRGADLEALWVDDESGYKHRKIDGKLAQYDLRIKAVDPSDLGIDKVKQYSGYLDDNANDKHLFFWFFESRNDPFGDPVVLWLNGGPGCSSLTGMFFELGPASIDENITANYNPYSWNSNSSIIFLDQPVNVGYSYSSQAVSDTVTAAKDVYALLTLFFTQFRQYSAQDFHIAGESYAGHYIPVFASEILHHNNTNINLQSVLIGNGLTDPLSQYPFYRPMACGDGGYPSVLDSQSCQSMDNALPRCLSMIKSCYDIESTFTCLPASIYCNNALIGPYQKTGRNPYDVRTNCTGNDLCYPQLNYITEYLNKPHVMRSLGVEVDSYESCNMDINRNFLFHGDWMKPYHRLVPSLLARIPVLIYAGDADFICNWLGNKAWTEALEYPGHAKFAEAPMENLTMINSQGKNEVFGEVKSHSNLTFMRIFKAGHMTPFDSPQASLEFANSWLSGEWSEV.

Residues 1 to 18 form the signal peptide; that stretch reads MKSLVLGLLVGSAIASGP. A propeptide spanning residues 19 to 131 is cleaved from the precursor; sequence LQHVLHAPPD…KLAQYDLRIK (113 aa). The tract at residues 20–39 is disordered; it reads QHVLHAPPDPEPKPEPEPQV. 5 cysteine pairs are disulfide-bonded: C185/C424, C319/C333, C343/C366, C350/C359, and C388/C394. N-linked (GlcNAc...) asparagine glycans are attached at residues N203 and N216. S272 is an active-site residue. A glycan (N-linked (GlcNAc...) asparagine) is linked at N289. N387 carries an N-linked (GlcNAc...) asparagine glycan. D463 is an active-site residue. N493 and N514 each carry an N-linked (GlcNAc...) asparagine glycan. H525 is an active-site residue.

The protein belongs to the peptidase S10 family.

It is found in the vacuole. The enzyme catalyses Release of a C-terminal amino acid with broad specificity.. Its function is as follows. Vacuolar carboxypeptidase involved in degradation of small peptides. Digests preferentially peptides containing an aliphatic or hydrophobic residue in P1' position, as well as methionine, leucine or phenylalanine in P1 position of ester substrate. This is Carboxypeptidase Y homolog A (CPYA) from Paracoccidioides brasiliensis (strain Pb03).